The primary structure comprises 296 residues: Glutamate 5-kinase (296 aa).

Position 15 (K15) interacts with ATP. Residues S55, D159, and N186 each coordinate substrate. Residues 206–207 (SD) and 248–254 (TGGIATK) each bind ATP.

This sequence belongs to the glutamate 5-kinase family.

Its subcellular location is the cytoplasm. It carries out the reaction L-glutamate + ATP = L-glutamyl 5-phosphate + ADP. It participates in amino-acid biosynthesis; L-proline biosynthesis; L-glutamate 5-semialdehyde from L-glutamate: step 1/2. In terms of biological role, catalyzes the transfer of a phosphate group to glutamate to form L-glutamate 5-phosphate. This Treponema pallidum (strain Nichols) protein is Glutamate 5-kinase.